A 256-amino-acid polypeptide reads, in one-letter code: MAVGKNKRLSKGKKGIKKKVVDPFTRKDWYDIKAPSIFEKRNVGKTLVNRSSGLKNANDSLKGRIVEISLADLNNDEEQAFRKIKLRIDEVQGKNCLTNFHGMSFSSDKLRSLVRKWQTLIEAHVDVKTTDGYLLRLFAIGFTKRRPTQVRKTTYAQSSQIRQIRQKMFEIMTREASSCDLKELVQKFIPEAIGREIEKAARGIYPLQNVFVHKAKILKAPKFDMSKLLELHGESTDETGTRVVKDFKEPEILESV.

Alanine 2 carries the post-translational modification N-acetylalanine; partial.

The protein belongs to the eukaryotic ribosomal protein eS1 family. Component of the small ribosomal subunit. Mature ribosomes consist of a small (40S) and a large (60S) subunit. The 40S subunit contains about 33 different proteins and 1 molecule of RNA (18S). The 60S subunit contains about 49 different proteins and 3 molecules of RNA (25S, 5.8S and 5S).

The protein localises to the cytoplasm. The polypeptide is Small ribosomal subunit protein eS1 (Postia placenta (strain ATCC 44394 / Madison 698-R) (Brown rot fungus)).